Here is a 75-residue protein sequence, read N- to C-terminus: Protein CYSTEINE-RICH TRANSMEMBRANE MODULE 5 (75 aa).

The segment at 1–29 (MSQYSQNQYAGAYPTPPVSTGPYVAPPPL) is disordered. Positions 14-29 (PTPPVSTGPYVAPPPL) are enriched in pro residues. Residues 52-69 (AADGFLKGCLATMLACCV) form a helical membrane-spanning segment.

This sequence belongs to the CYSTM1 family. Heterodimers. Interacts with CYSTM7 and WIH1/CYSTM13. As to expression, mostly expressed in roots, stems, rosette leaves and siliques and, to a lower extent, in flowers and cauline leaves.

It localises to the cell membrane. The protein localises to the nucleus. Functionally, involved in resistance to abiotic stress. The chain is Protein CYSTEINE-RICH TRANSMEMBRANE MODULE 5 from Arabidopsis thaliana (Mouse-ear cress).